A 196-amino-acid chain; its full sequence is Imidazoleglycerol-phosphate dehydratase (196 aa).

The protein belongs to the imidazoleglycerol-phosphate dehydratase family.

Its subcellular location is the cytoplasm. The enzyme catalyses D-erythro-1-(imidazol-4-yl)glycerol 3-phosphate = 3-(imidazol-4-yl)-2-oxopropyl phosphate + H2O. Its pathway is amino-acid biosynthesis; L-histidine biosynthesis; L-histidine from 5-phospho-alpha-D-ribose 1-diphosphate: step 6/9. This chain is Imidazoleglycerol-phosphate dehydratase, found in Moorella thermoacetica (strain ATCC 39073 / JCM 9320).